Reading from the N-terminus, the 809-residue chain is Trimethylamine-N-oxide reductase 2 (809 aa).

Residues 1–31 (MTLTRREFIKHSGIAAGTLVVTSAAPLPAWA) constitute a signal peptide (tat-type signal). S176 is a Mo-bis(molybdopterin guanine dinucleotide) binding site.

Belongs to the prokaryotic molybdopterin-containing oxidoreductase family. Mo-bis(molybdopterin guanine dinucleotide) is required as a cofactor. Post-translationally, predicted to be exported by the Tat system. The position of the signal peptide cleavage has not been experimentally proven.

Its subcellular location is the periplasm. The enzyme catalyses trimethylamine + 2 Fe(III)-[cytochrome c] + H2O = trimethylamine N-oxide + 2 Fe(II)-[cytochrome c] + 3 H(+). Functionally, reduces trimethylamine-N-oxide (TMAO) into trimethylamine; an anaerobic reaction coupled to energy-yielding reactions. Can also reduce other N- and S-oxide compounds such as 4-methylmorpholine-N-oxide and biotin sulfoxide (BSO), but with a lower catalytic efficiency. This is Trimethylamine-N-oxide reductase 2 (torZ) from Escherichia coli O6:H1 (strain CFT073 / ATCC 700928 / UPEC).